Reading from the N-terminus, the 316-residue chain is Probable cobalamin biosynthesis protein CobD (316 aa).

5 helical membrane passes run 1-21 (MITEIFPFSVLILALLIDIVL), 50-70 (ISGMIISVLVISGAVLAGFAL), 89-109 (ILALIISSYLLKSTFAFKSLI), 165-185 (PLFYYVLFSCAGLGVEAALAF), and 294-314 (ISLIGRAMVLAALLSALLLIL).

It belongs to the CobD/CbiB family.

The protein resides in the cell membrane. Its pathway is cofactor biosynthesis; adenosylcobalamin biosynthesis. In terms of biological role, converts cobyric acid to cobinamide by the addition of aminopropanol on the F carboxylic group. The polypeptide is Probable cobalamin biosynthesis protein CobD (Methanothrix thermoacetophila (strain DSM 6194 / JCM 14653 / NBRC 101360 / PT) (Methanosaeta thermophila)).